Here is a 95-residue protein sequence, read N- to C-terminus: UPF0358 protein BT9727_3692 (95 aa).

Belongs to the UPF0358 family.

The chain is UPF0358 protein BT9727_3692 from Bacillus thuringiensis subsp. konkukian (strain 97-27).